The chain runs to 644 residues: Sodium/hydrogen exchanger 9 (644 aa).

Over 1–20 (MAGQLRFTSGKDEDHFQHQG) the chain is Lumenal. A helical membrane pass occupies residues 21–41 (AVELLAFNFLLILTILTIWLF). The Cytoplasmic portion of the chain corresponds to 42–45 (KNHR). A helical transmembrane segment spans residues 46–66 (FRFLHETGGAMVYGLIMGLIL). Residues 67-126 (RYATAPTDIDSGTVYNCGNLFFSPSTLLVNITDQVYEYKYQREINQHNISPHQGNAILEK) lie on the Lumenal side of the membrane. The helical transmembrane segment at 127–147 (MTFDPEIFFNVLLPPIIFHAG) threads the bilayer. Residues 148–164 (YSLKKRHFFQNLGSILT) lie on the Cytoplasmic side of the membrane. A helical membrane pass occupies residues 165–185 (YAFLGTAISCVVIGLIMYGFV). Topologically, residues 186–203 (KAMVHAGQLKSGDFHFTD) are lumenal. Residues 204 to 224 (CLFFGSLMSATDPVTVLAIFH) form a helical membrane-spanning segment. The Cytoplasmic portion of the chain corresponds to 225–235 (ELHVDPDLYTL). A helical transmembrane segment spans residues 236–256 (LFGESVLNDAVAIVLTYSISI). Residues 257 to 277 (YSPKENPNAFDTAAFFQSVGN) lie on the Lumenal side of the membrane. The helical transmembrane segment at 278-298 (FLGIFAGSFAMGSAYAVVTAL) threads the bilayer. Residues 299 to 309 (LTKFTKLREFP) are Cytoplasmic-facing. The chain crosses the membrane as a helical span at residues 310–327 (MLETGLFFLLSWSAFLSA). Over 328–333 (EAAGLT) the chain is Lumenal. Residues 334–350 (GIVAVLFCGVTQAHYTY) traverse the membrane as a helical segment. The Cytoplasmic portion of the chain corresponds to 351-364 (NNLSSDSKLRTKQL). Residues 365–385 (FEFMNFLAENVIFCYMGLALF) form a helical membrane-spanning segment. Residue Thr-386 is a topological domain, lumenal. The helical transmembrane segment at 387–407 (FQNHIFNALFILGAFLAIFVA) threads the bilayer. Over 408-429 (RACNIYPLSFLLNLGRKQKIPW) the chain is Cytoplasmic. A helical membrane pass occupies residues 430–450 (NFQHMMMFSGLRGAIAFALAI). At 451–465 (RNTESQPKQMMFTTT) the chain is on the lumenal side. A helical membrane pass occupies residues 466–486 (LLLVFFTVWVFGGGTTPMLTW). At 487–644 (LQIRVGVDLD…EQTRGQPQMD (158 aa)) the chain is on the cytoplasmic side. The tract at residues 590-644 (YQEQSPSPSSPTTKLALDQKSSGQTPGKENIYEGDLGLGGYDLKLEQTRGQPQMD) is disordered.

Belongs to the monovalent cation:proton antiporter 1 (CPA1) transporter (TC 2.A.36) family. As to quaternary structure, homodimer; phosphatidylinositol-4,5-bisphosphate (PIP2) and phosphatidylinositol 3,4,5-trisphosphate (PIP3) could be involved in the dimer stabilization. Interacts (via the C-terminus) with RACK1. Interacts with CHP1. In terms of tissue distribution, expressed in the brain. Highly expressed in immune cells, specifically macrophages.

Its subcellular location is the late endosome membrane. The protein resides in the cell membrane. It is found in the early endosome membrane. The protein localises to the recycling endosome membrane. It localises to the cytoplasmic vesicle. Its subcellular location is the phagosome membrane. The catalysed reaction is Na(+)(in) + H(+)(out) = Na(+)(out) + H(+)(in). It carries out the reaction K(+)(in) + H(+)(out) = K(+)(out) + H(+)(in). Functionally, endosomal Na(+), K(+)/H(+) antiporter. Mediates the electroneutral exchange of endosomal luminal H(+) for a cytosolic Na(+) or K(+). By facilitating proton efflux, SLC9A9 counteracts the acidity generated by vacuolar (V)-ATPase, thereby limiting luminal acidification. Regulates organellar pH and consequently, endosome maturation and endocytic trafficking of plasma membrane receptors and neurotransporters. Promotes the recycling of transferrin receptors back to the cell surface to facilitate additional iron uptake in the brain. Regulates synaptic transmission by regulating the luminal pH of axonal endosomes. Regulates phagosome lumenal pH, thus affecting phagosome maturation, and consequently, microbicidal activity in macrophages. Can also be active at the cell surface of specialized cells, e.g., in the inner ear hair bundles uses the high K(+) of the endolymph to regulate intracelular pH. In Mus musculus (Mouse), this protein is Sodium/hydrogen exchanger 9 (Slc9a9).